The sequence spans 151 residues: Macrodomain Ter protein (151 aa).

This sequence belongs to the MatP family. As to quaternary structure, homodimer.

Its subcellular location is the cytoplasm. Functionally, required for spatial organization of the terminus region of the chromosome (Ter macrodomain) during the cell cycle. Prevents early segregation of duplicated Ter macrodomains during cell division. Binds specifically to matS, which is a 13 bp signature motif repeated within the Ter macrodomain. The sequence is that of Macrodomain Ter protein from Escherichia fergusonii (strain ATCC 35469 / DSM 13698 / CCUG 18766 / IAM 14443 / JCM 21226 / LMG 7866 / NBRC 102419 / NCTC 12128 / CDC 0568-73).